A 121-amino-acid polypeptide reads, in one-letter code: Small ribosomal subunit protein uS13 (121 aa).

Positions 93–121 are disordered; sequence RKGLPVRGQKTKTNARTRKGKRKTVGAKS.

Belongs to the universal ribosomal protein uS13 family. Part of the 30S ribosomal subunit. Forms a loose heterodimer with protein S19. Forms two bridges to the 50S subunit in the 70S ribosome.

Functionally, located at the top of the head of the 30S subunit, it contacts several helices of the 16S rRNA. In the 70S ribosome it contacts the 23S rRNA (bridge B1a) and protein L5 of the 50S subunit (bridge B1b), connecting the 2 subunits; these bridges are implicated in subunit movement. Contacts the tRNAs in the A and P-sites. The protein is Small ribosomal subunit protein uS13 of Campylobacter lari (strain RM2100 / D67 / ATCC BAA-1060).